Consider the following 508-residue polypeptide: Cytochrome P450 monooxygenase lepD (508 aa).

Residues 22 to 42 (IAAAVAVVASIVIYLALSSFF) traverse the membrane as a helical segment. N-linked (GlcNAc...) asparagine glycosylation is found at Asn-53 and Asn-416. Cys-454 contacts heme.

It belongs to the cytochrome P450 family. Requires heme as cofactor.

The protein localises to the membrane. Cytochrome P450 monooxygenase; part of the gene cluster 23 that mediates the biosynthesis of a family of 2-pyridones known as leporins. The hybrid PKS-NRPS synthetase lepA and the enoyl reductase lepG are responsible for fusion of phenylalanine with a hexaketide and subsequent release of the stable tetramic acid precursor, pre-leporin C. Because lepA lacks a designated enoylreductase (ER) domain, the required activity is provided the enoyl reductase lepG. It is possible that the dehydrogenase lepF also participates in production of pre-leporin C. Cytochrome P450 monooxygenase lepH is then required for the ring expansion step to yield leporin C. Leporin C is then presumably further oxidized by the N-hydroxylase lepD to form leporin B. LepI may possess a function in biosynthesis upstream of lepA. Leporin B is further oxidized in the presence of ferric ion to give the leporin B trimer-iron chelate, but whether or not this reaction is catalyzed by an enzyme in the pathway or by ferric ion is not determined yet. The sequence is that of Cytochrome P450 monooxygenase lepD from Aspergillus flavus (strain ATCC 200026 / FGSC A1120 / IAM 13836 / NRRL 3357 / JCM 12722 / SRRC 167).